We begin with the raw amino-acid sequence, 359 residues long: Chorismate synthase (359 aa).

Arg47 is a binding site for NADP(+). FMN-binding positions include 123 to 125 (RSS), Gly283, 298 to 302 (KPTSS), and Arg326.

It belongs to the chorismate synthase family. Homotetramer. The cofactor is FMNH2.

The catalysed reaction is 5-O-(1-carboxyvinyl)-3-phosphoshikimate = chorismate + phosphate. It participates in metabolic intermediate biosynthesis; chorismate biosynthesis; chorismate from D-erythrose 4-phosphate and phosphoenolpyruvate: step 7/7. Catalyzes the anti-1,4-elimination of the C-3 phosphate and the C-6 proR hydrogen from 5-enolpyruvylshikimate-3-phosphate (EPSP) to yield chorismate, which is the branch point compound that serves as the starting substrate for the three terminal pathways of aromatic amino acid biosynthesis. This reaction introduces a second double bond into the aromatic ring system. This is Chorismate synthase from Chlamydia pneumoniae (Chlamydophila pneumoniae).